The primary structure comprises 611 residues: DNA mismatch repair protein MutL (611 aa).

A disordered region spans residues 364–384 (NVNSKPSKYRPATSPTVPKYT).

Belongs to the DNA mismatch repair MutL/HexB family.

In terms of biological role, this protein is involved in the repair of mismatches in DNA. It is required for dam-dependent methyl-directed DNA mismatch repair. May act as a 'molecular matchmaker', a protein that promotes the formation of a stable complex between two or more DNA-binding proteins in an ATP-dependent manner without itself being part of a final effector complex. In Rickettsia bellii (strain OSU 85-389), this protein is DNA mismatch repair protein MutL.